We begin with the raw amino-acid sequence, 350 residues long: Biotin synthase (350 aa).

Residues Asn42 to Arg269 enclose the Radical SAM core domain. Cys57, Cys61, and Cys64 together coordinate [4Fe-4S] cluster. Residues Cys101, Cys132, Cys192, and Arg264 each coordinate [2Fe-2S] cluster.

It belongs to the radical SAM superfamily. Biotin synthase family. Homodimer. The cofactor is [4Fe-4S] cluster. It depends on [2Fe-2S] cluster as a cofactor.

It catalyses the reaction (4R,5S)-dethiobiotin + (sulfur carrier)-SH + 2 reduced [2Fe-2S]-[ferredoxin] + 2 S-adenosyl-L-methionine = (sulfur carrier)-H + biotin + 2 5'-deoxyadenosine + 2 L-methionine + 2 oxidized [2Fe-2S]-[ferredoxin]. The protein operates within cofactor biosynthesis; biotin biosynthesis; biotin from 7,8-diaminononanoate: step 2/2. In terms of biological role, catalyzes the conversion of dethiobiotin (DTB) to biotin by the insertion of a sulfur atom into dethiobiotin via a radical-based mechanism. This chain is Biotin synthase, found in Saccharophagus degradans (strain 2-40 / ATCC 43961 / DSM 17024).